A 464-amino-acid chain; its full sequence is Uronate isomerase (464 aa).

The protein belongs to the metallo-dependent hydrolases superfamily. Uronate isomerase family.

The enzyme catalyses D-glucuronate = D-fructuronate. The catalysed reaction is aldehydo-D-galacturonate = keto-D-tagaturonate. It functions in the pathway carbohydrate metabolism; pentose and glucuronate interconversion. This Caldicellulosiruptor bescii (strain ATCC BAA-1888 / DSM 6725 / KCTC 15123 / Z-1320) (Anaerocellum thermophilum) protein is Uronate isomerase.